A 270-amino-acid polypeptide reads, in one-letter code: Energy-coupling factor transporter ATP-binding protein EcfA (270 aa).

In terms of domain architecture, ABC transporter spans 5–238 (VEIENLTFFY…QLLEQNGLKA (234 aa)). 38-45 (GHNGAGKS) is an ATP binding site.

This sequence belongs to the ABC transporter superfamily. Energy-coupling factor EcfA family. As to quaternary structure, forms a stable energy-coupling factor (ECF) transporter complex composed of 2 membrane-embedded substrate-binding proteins (S component), 2 ATP-binding proteins (A component) and 2 transmembrane proteins (T component).

Its subcellular location is the cell membrane. In terms of biological role, ATP-binding (A) component of a common energy-coupling factor (ECF) ABC-transporter complex. Unlike classic ABC transporters this ECF transporter provides the energy necessary to transport a number of different substrates. The sequence is that of Energy-coupling factor transporter ATP-binding protein EcfA from Carboxydothermus hydrogenoformans (strain ATCC BAA-161 / DSM 6008 / Z-2901).